Here is a 153-residue protein sequence, read N- to C-terminus: Endoribonuclease YbeY (153 aa).

3 residues coordinate Zn(2+): H118, H122, and H128.

It belongs to the endoribonuclease YbeY family. Zn(2+) serves as cofactor.

The protein resides in the cytoplasm. Single strand-specific metallo-endoribonuclease involved in late-stage 70S ribosome quality control and in maturation of the 3' terminus of the 16S rRNA. In Pelagibacter ubique (strain HTCC1062), this protein is Endoribonuclease YbeY.